We begin with the raw amino-acid sequence, 434 residues long: uncharacterized protein (434 aa).

The next 5 helical transmembrane spans lie at 27–47 (IFLL…QSVI), 64–84 (FYLS…FVNW), 244–264 (IILA…ATVL), 289–309 (VPVN…PSLL), and 387–407 (LILT…GAVF).

This sequence belongs to the CbiQ family.

Its subcellular location is the cell membrane. This is an uncharacterized protein from Mycoplasma pneumoniae (strain ATCC 29342 / M129 / Subtype 1) (Mycoplasmoides pneumoniae).